We begin with the raw amino-acid sequence, 118 residues long: V-type proton ATPase subunit G 1 (118 aa).

Ala2 is subject to N-acetylalanine.

The protein belongs to the V-ATPase G subunit family. In terms of assembly, V-ATPase is a heteromultimeric enzyme made up of two complexes: the ATP-hydrolytic V1 complex and the proton translocation V0 complex. The V1 complex consists of three catalytic AB heterodimers that form a heterohexamer, three peripheral stalks each consisting of EG heterodimers, one central rotor including subunits D and F, and the regulatory subunits C and H. The proton translocation complex V0 consists of the proton transport subunit a, a ring of proteolipid subunits c9c'', rotary subunit d, subunits e and f, and the accessory subunits ATP6AP1/Ac45 and ATP6AP2/PRR. Kidney; localizes to early distal nephron, encompassing thick ascending limbs and distal convoluted tubules (at protein level). Ubiquitous.

It is found in the apical cell membrane. Functionally, subunit of the V1 complex of vacuolar(H+)-ATPase (V-ATPase), a multisubunit enzyme composed of a peripheral complex (V1) that hydrolyzes ATP and a membrane integral complex (V0) that translocates protons. V-ATPase is responsible for acidifying and maintaining the pH of intracellular compartments and in some cell types, is targeted to the plasma membrane, where it is responsible for acidifying the extracellular environment. In aerobic conditions, involved in intracellular iron homeostasis, thus triggering the activity of Fe(2+) prolyl hydroxylase (PHD) enzymes, and leading to HIF1A hydroxylation and subsequent proteasomal degradation. This Homo sapiens (Human) protein is V-type proton ATPase subunit G 1 (ATP6V1G1).